The following is a 511-amino-acid chain: FAD-dependent monooxygenase AOL_s00215g279 (511 aa).

Residues 1 to 17 form the signal peptide; the sequence is MRFTLYGLLGFASLLHA. The 172-residue stretch at 85-256 folds into the FAD-binding PCMH-type domain; sequence CWVNPACIVS…TEFDLRTRYS (172 aa). At histidine 122 the chain carries Pros-8alpha-FAD histidine.

It belongs to the oxygen-dependent FAD-linked oxidoreductase family.

It participates in secondary metabolite biosynthesis; terpenoid biosynthesis. FAD-dependent monooxygenase; part of the gene cluster that mediates the biosynthesis of sesquiterpenyl epoxy-cyclohexenoids (SECs) such as anthrobotrisins and arthrosporols, metabolites that possess a novel hybrid carbon skeleton consisting of a polyketide-derived epoxycyclohexenol combined with a terpenoid-derived monocyclic sesquiterpenol substructure (PKS-PTS hybrid). The SEC pathway plays an important role for fungal soil colonization via decreasing fungal nematode-capturing ability. Within the pathway, the FAD-dependent monooxygenase AOL_s00215g279 plays a role in the oxygenation of the phenol moiety, most likely in the epoxy formation. The pathway begins with the biosynthesis of 6-methylsalicylic acid (6-MSA), the first precursor of the polyketide-derived epoxycyclohexenol in arthrosporols, by the polyketide synthase (PKS) AOL_s00215g283 via condensation of 1 acetate and 3 malonate units. The 6-methylsalicylic acid decarboxylase AOL_s00215g281 then catalyzes the decarboxylation of 6-methylsalicylic acid to yield m-cresol. The cytochrome P450 monooxygenase AOL_s00215g282 further oxidizes m-cresol to yield toluquinol. With the assistance of the oxidoreductase AOL_s00215g277, the polyprenyl transferase AOL_s00215g276 catalyzes the farnesylation of toluquinol to produce farnesyl hydroquinone, the hybrid precursor for biosynthesis of SECs. Farnesyl hydroquinone undergoes epoxidation and then subsequent dehydrogenation to form farnesyl epoxy-quinone, the first and simplest SEC. The cytochrome P450 monooxygenase AOL_s00215g278 and the FAD-dependent monooxygenase AOL_s00215g279 might be involved in the oxygenation of the phenol moiety, most likely in the epoxy formation. The cytochrome P450 monooxygenases AOL_s00215g274 and AOL_s00215g280 are involved in specific regional ketone reductions at respectively C-4 and C-1 of farnesyl epoxy-quinone PubMed:33823587. The polypeptide is FAD-dependent monooxygenase AOL_s00215g279 (Arthrobotrys oligospora (strain ATCC 24927 / CBS 115.81 / DSM 1491) (Nematode-trapping fungus)).